The following is a 130-amino-acid chain: Small ribosomal subunit protein uS11c (130 aa).

The protein belongs to the universal ribosomal protein uS11 family. As to quaternary structure, part of the 30S ribosomal subunit.

Its subcellular location is the plastid. The protein resides in the chloroplast. In Pyropia yezoensis (Susabi-nori), this protein is Small ribosomal subunit protein uS11c.